Reading from the N-terminus, the 434-residue chain is Cysteine--tRNA ligase (434 aa).

Cys-28 is a Zn(2+) binding site. The short motif at 30 to 40 (PTVYDDIHIGN) is the 'HIGH' region element. Positions 207, 232, and 236 each coordinate Zn(2+). The 'KMSKS' region signature appears at 264-268 (KMSKS). Lys-267 provides a ligand contact to ATP.

It belongs to the class-I aminoacyl-tRNA synthetase family. As to quaternary structure, monomer. The cofactor is Zn(2+).

It localises to the cytoplasm. It carries out the reaction tRNA(Cys) + L-cysteine + ATP = L-cysteinyl-tRNA(Cys) + AMP + diphosphate. The polypeptide is Cysteine--tRNA ligase (Acholeplasma laidlawii (strain PG-8A)).